The following is a 430-amino-acid chain: Enolase (430 aa).

A (2R)-2-phosphoglycerate-binding site is contributed by glutamine 168. Glutamate 210 acts as the Proton donor in catalysis. Mg(2+) is bound by residues aspartate 247, glutamate 288, and aspartate 315. The (2R)-2-phosphoglycerate site is built by lysine 340, arginine 369, serine 370, and lysine 391. The Proton acceptor role is filled by lysine 340.

Belongs to the enolase family. Mg(2+) is required as a cofactor.

The protein resides in the cytoplasm. The protein localises to the secreted. It localises to the cell surface. It carries out the reaction (2R)-2-phosphoglycerate = phosphoenolpyruvate + H2O. Its pathway is carbohydrate degradation; glycolysis; pyruvate from D-glyceraldehyde 3-phosphate: step 4/5. Functionally, catalyzes the reversible conversion of 2-phosphoglycerate (2-PG) into phosphoenolpyruvate (PEP). It is essential for the degradation of carbohydrates via glycolysis. The chain is Enolase from Rippkaea orientalis (strain PCC 8801 / RF-1) (Cyanothece sp. (strain PCC 8801)).